Reading from the N-terminus, the 137-residue chain is Large ribosomal subunit protein uL16c (137 aa).

Belongs to the universal ribosomal protein uL16 family. Part of the 50S ribosomal subunit.

It is found in the plastid. It localises to the chloroplast. The sequence is that of Large ribosomal subunit protein uL16c from Hordeum vulgare (Barley).